Here is a 126-residue protein sequence, read N- to C-terminus: MMCDRAVLTVRLVRSFEHRNFKPLVFKDVNLDQTVDEFISFVKQDISVRAGLPPPFRKFDYDTLKIIHQAHGAKTNELVMSLEDDEKLILREGCRLRACGVANETELAFFKMTDYIKFKADPHSEW.

It belongs to the UPF0538 family.

The protein is UPF0538 protein C2orf76 homolog of Danio rerio (Zebrafish).